Here is a 118-residue protein sequence, read N- to C-terminus: Small ribosomal subunit protein uS13 (118 aa).

A disordered region spans residues 99–118; that stretch reads GQRTRTNARTRKGPRKAIKK.

This sequence belongs to the universal ribosomal protein uS13 family. Part of the 30S ribosomal subunit. Forms a loose heterodimer with protein S19. Forms two bridges to the 50S subunit in the 70S ribosome.

Functionally, located at the top of the head of the 30S subunit, it contacts several helices of the 16S rRNA. In the 70S ribosome it contacts the 23S rRNA (bridge B1a) and protein L5 of the 50S subunit (bridge B1b), connecting the 2 subunits; these bridges are implicated in subunit movement. Contacts the tRNAs in the A and P-sites. This is Small ribosomal subunit protein uS13 from Xylella fastidiosa (strain M12).